Consider the following 256-residue polypeptide: Ubiquinone/menaquinone biosynthesis C-methyltransferase UbiE (256 aa).

S-adenosyl-L-methionine contacts are provided by residues threonine 79, aspartate 100, and 128–129; that span reads DA.

The protein belongs to the class I-like SAM-binding methyltransferase superfamily. MenG/UbiE family.

It carries out the reaction a 2-demethylmenaquinol + S-adenosyl-L-methionine = a menaquinol + S-adenosyl-L-homocysteine + H(+). The catalysed reaction is a 2-methoxy-6-(all-trans-polyprenyl)benzene-1,4-diol + S-adenosyl-L-methionine = a 5-methoxy-2-methyl-3-(all-trans-polyprenyl)benzene-1,4-diol + S-adenosyl-L-homocysteine + H(+). The protein operates within quinol/quinone metabolism; menaquinone biosynthesis; menaquinol from 1,4-dihydroxy-2-naphthoate: step 2/2. It functions in the pathway cofactor biosynthesis; ubiquinone biosynthesis. Methyltransferase required for the conversion of demethylmenaquinol (DMKH2) to menaquinol (MKH2) and the conversion of 2-polyprenyl-6-methoxy-1,4-benzoquinol (DDMQH2) to 2-polyprenyl-3-methyl-6-methoxy-1,4-benzoquinol (DMQH2). This is Ubiquinone/menaquinone biosynthesis C-methyltransferase UbiE from Pseudomonas fluorescens (strain Pf0-1).